Consider the following 313-residue polypeptide: MPIPKAFALLGPTACGKTALALKIAETLPVEIISLDSALVYTGMDIGTAKPSASERAFVPHHLIDIITPVQTYSAARFVEDCTRLIGEITARGKCPLIVGGTMMYFRALTQGLNDLPEADACLRADLDEQKQMYGLDFLYRTLQKVDPETACRLKPNDSQRIERALEVYYLTGKPMSEHLGRQSPHTLPFDLHTAALIPENRARLHENIALRFHLMLEQGFIGEVENLRRRYPGLTADSPAIRCVGYRQAWEYLDGKTDFPAFVEKGIAATRQLAKRQLTWLRKTPLDCVADPFSDGTSCTRLIEAAKRFFGA.

Position 11 to 18 (11 to 18 (GPTACGKT)) interacts with ATP. 13 to 18 (TACGKT) provides a ligand contact to substrate. Interaction with substrate tRNA regions lie at residues 36 to 39 (DSAL), 160 to 164 (QRIER), and 243 to 248 (RCVGYR).

Belongs to the IPP transferase family. As to quaternary structure, monomer. The cofactor is Mg(2+).

It carries out the reaction adenosine(37) in tRNA + dimethylallyl diphosphate = N(6)-dimethylallyladenosine(37) in tRNA + diphosphate. Its function is as follows. Catalyzes the transfer of a dimethylallyl group onto the adenine at position 37 in tRNAs that read codons beginning with uridine, leading to the formation of N6-(dimethylallyl)adenosine (i(6)A). This chain is tRNA dimethylallyltransferase, found in Neisseria meningitidis serogroup C (strain 053442).